We begin with the raw amino-acid sequence, 343 residues long: Aspartate carbamoyltransferase catalytic subunit (343 aa).

Positions 91 and 92 each coordinate carbamoyl phosphate. Lys119 serves as a coordination point for L-aspartate. Carbamoyl phosphate is bound by residues Arg141, His171, and Gln174. Arg204 and Arg259 together coordinate L-aspartate. Residues Gly300 and Pro301 each contribute to the carbamoyl phosphate site.

It belongs to the aspartate/ornithine carbamoyltransferase superfamily. ATCase family. As to quaternary structure, heterododecamer (2C3:3R2) of six catalytic PyrB chains organized as two trimers (C3), and six regulatory PyrI chains organized as three dimers (R2).

The enzyme catalyses carbamoyl phosphate + L-aspartate = N-carbamoyl-L-aspartate + phosphate + H(+). It participates in pyrimidine metabolism; UMP biosynthesis via de novo pathway; (S)-dihydroorotate from bicarbonate: step 2/3. In terms of biological role, catalyzes the condensation of carbamoyl phosphate and aspartate to form carbamoyl aspartate and inorganic phosphate, the committed step in the de novo pyrimidine nucleotide biosynthesis pathway. This is Aspartate carbamoyltransferase catalytic subunit from Burkholderia multivorans (strain ATCC 17616 / 249).